Reading from the N-terminus, the 843-residue chain is MALPRCMWPNYVWRAMMACVVHRGSGAPLTLCLLGCLLQTFHVLSQKLDDVDPLVTTNFGKIRGIKKELNNEILGPVIQFLGVPYAAPPTGEHRFQPPEPPSPWSDIRNATQFAPVCPQNIIDGRLPEVMLPVWFTNNLDVVSSYVQDQSEDCLYLNIYVPTEDGPLTKKHTDDLGDNDGAEDEDIRDSGGPKPVMVYIHGGSYMEGTGNLYDGSVLASYGNVIVITVNYRLGVLGFLSTGDQAAKGNYGLLDLIQALRWTSENIGFFGGDPLRITVFGSGAGGSCVNLLTLSHYSEGNRWSNSTKGLFQRAIAQSGTALSSWAVSFQPAKYARILATKVGCNVSDTVELVECLQKKPYKELVDQDVQPARYHIAFGPVIDGDVIPDDPQILMEQGEFLNYDIMLGVNQGEGLKFVENIVDSDDGVSASDFDFAVSNFVDNLYGYPEGKDVLRETIKFMYTDWADRHNPETRRKTLLALFTDHQWVAPAVATADLHSNFGSPTYFYAFYHHCQTDQVPAWADAAHGDEVPYVLGIPMIGPTELFPCNFSKNDVMLSAVVMTYWTNFAKTGDPNQPVPQDTKFIHTKPNRFEEVAWTRYSQKDQLYLHIGLKPRVKEHYRANKVNLWLELVPHLHNLNDISQYTSTTTKVPSTDITLRPTRKNSTPVTSAFPTAKQDDPKQQPSPFSVDQRDYSTELSVTIAVGASLLFLNILAFAALYYKKDKRRHDVHRRCSPQRTTTNDLTHAPEEEIMSLQMKHTDLDHECESIHPHEVVLRTACPPDYTLAMRRSPDDIPLMTPNTITMIPNTIPGIQPLHTFNTFTGGQNNTLPHPHPHPHSHSTTRV.

An N-terminal signal peptide occupies residues 1–45 (MALPRCMWPNYVWRAMMACVVHRGSGAPLTLCLLGCLLQTFHVLS). Residues 46–697 (QKLDDVDPLV…DQRDYSTELS (652 aa)) lie on the Extracellular side of the membrane. A glycan (N-linked (GlcNAc...) (complex) asparagine) is linked at N109. C117 and C153 form a disulfide bridge. A disordered region spans residues 167–190 (LTKKHTDDLGDNDGAEDEDIRDSG). Acidic residues predominate over residues 175 to 186 (LGDNDGAEDEDI). 2 N-linked (GlcNAc...) (complex) asparagine glycosylation sites follow: N303 and N343. 2 disulfide bridges follow: C342–C353 and C512–C546. Residue N547 is glycosylated (N-linked (GlcNAc...) asparagine). Residues 647-688 (TKVPSTDITLRPTRKNSTPVTSAFPTAKQDDPKQQPSPFSVD) form a disordered region. Over residues 661 to 670 (KNSTPVTSAF) the composition is skewed to polar residues. O-linked (GalNAc...) serine glycans are attached at residues S683 and S686. A helical transmembrane segment spans residues 698–718 (VTIAVGASLLFLNILAFAALY). The Cytoplasmic portion of the chain corresponds to 719 to 843 (YKKDKRRHDV…HPHSHSTTRV (125 aa)). A disordered region spans residues 822–843 (GGQNNTLPHPHPHPHSHSTTRV). Residues 831–843 (PHPHPHSHSTTRV) are compositionally biased toward basic residues.

This sequence belongs to the type-B carboxylesterase/lipase family. Interacts with neurexins NRXN1, NRXN2 and NRXN3. Interaction with neurexins is mediated by heparan sulfate glycan modification on neurexin. Interacts (via its C-terminus) with DLG4/PSD-95 (via PDZ domain 3). Interacts with AIP1, GOPC and PDZRN3. Interacts with NLGN3. Brain and arteries (at protein level). Expressed in olfactory bulb. Detected in brain.

It localises to the cell membrane. The protein localises to the postsynaptic density. Its subcellular location is the synaptic cleft. It is found in the synaptic cell membrane. Cell surface protein involved in cell-cell-interactions via its interactions with neurexin family members. Plays a role in synapse function and synaptic signal transmission, and probably mediates its effects by recruiting and clustering other synaptic proteins. May promote the initial formation of synapses, but is not essential for this. In vitro, triggers the de novo formation of presynaptic structures. May be involved in specification of excitatory synapses. Required to maintain wakefulness quality and normal synchrony of cerebral cortex activity during wakefulness and sleep. The protein is involved in nervous system development. This Mus musculus (Mouse) protein is Neuroligin-1 (Nlgn1).